Here is a 442-residue protein sequence, read N- to C-terminus: Proline--tRNA ligase (442 aa).

The protein belongs to the class-II aminoacyl-tRNA synthetase family. ProS type 2 subfamily. As to quaternary structure, homodimer.

The protein localises to the cytoplasm. The enzyme catalyses tRNA(Pro) + L-proline + ATP = L-prolyl-tRNA(Pro) + AMP + diphosphate. Catalyzes the attachment of proline to tRNA(Pro) in a two-step reaction: proline is first activated by ATP to form Pro-AMP and then transferred to the acceptor end of tRNA(Pro). The polypeptide is Proline--tRNA ligase (Brucella melitensis biotype 2 (strain ATCC 23457)).